We begin with the raw amino-acid sequence, 502 residues long: MMRLKQLNEMSASEFIHLLGGVFENSSWVAERAEPNRPYSSFQSLYNKMVEIVETASDNEQLKLIQMHPHLGTNVKITDFSQEEQKHAGLNELTKDEQNHLILLNQKYKDKFGFPFVMAVRGKIKQEIFRTIKERLQNNHQTEFKQALEEIKKIAMFRLQEIFREGENNSMTKHKERVMYYGKGDVFAYRTYLKPLTGVRTIPESPFSGRDHILFGVNVKISVGGTKLLTSFTKGDNSLVVATDSMKNFIQKHLASYTGTTIEGFLEYVATSFLKKYSHIEKISLIGEEIPFETTFAVKNGNRAASELVFKKSRNEYATAYLNMVRNEDNTLNITEQQSGLAGLQLIKVSGNSFVGFIRDEYTTLPEDSNRPLFVYLNIKWKYKNTEDSFGTNPENYVAAEQIRDIATSVFHETETLSIQHLIYLIGRRILERFPQLQEVYFESQNHTWDKIVEEIPESEGKVYTEPRPPYGFQCFTVTQEDLPHENILMFSDEPDHKGALK.

Positions 1-178 (MMRLKQLNEM…NSMTKHKERV (178 aa)) are OHCU decarboxylase. Residue His-68 is the Proton donor; for OHCU decarboxylase activity of the active site. Residues Pro-69, 81 to 85 (SQEEQ), and 116 to 120 (FVMAV) contribute to the 5-hydroxy-2-oxo-4-ureido-2,5-dihydro-1H-imidazole-5-carboxylate site. Residues 179 to 502 (MYYGKGDVFA…DEPDHKGALK (324 aa)) are urate oxidase. Residue Lys-183 is the Charge relay system; for urate oxidase activity of the active site. Lys-194 (charge relay system) is an active-site residue. The active-site Charge relay system; for urate oxidase activity is the Thr-243. Thr-243, Asp-244, Phe-354, Arg-371, Ile-419, Gln-420, and Asn-446 together coordinate urate.

In the N-terminal section; belongs to the OHCU decarboxylase family. It in the C-terminal section; belongs to the uricase family.

It carries out the reaction 5-hydroxy-2-oxo-4-ureido-2,5-dihydro-1H-imidazole-5-carboxylate + H(+) = (S)-allantoin + CO2. It catalyses the reaction urate + O2 + H2O = 5-hydroxyisourate + H2O2. The protein operates within purine metabolism; urate degradation; (S)-allantoin from urate: step 1/3. Its pathway is purine metabolism; urate degradation; (S)-allantoin from urate: step 3/3. Its function is as follows. Catalyzes two steps in the degradation of uric acid, i.e. the oxidation of uric acid to 5-hydroxyisourate (HIU) and the stereoselective decarboxylation of 2-oxo-4-hydroxy-4-carboxy-5-ureidoimidazoline (OHCU) to (S)-allantoin. The chain is Uric acid degradation bifunctional protein (uao) from Bacillus sp. (strain TB-90).